The sequence spans 533 residues: MNFDVAVVGSGLAGLTVALHLADHRRVVVISKRTLPEGASDWAQGGIAAVLDSNDSHDEHVDDTLIAGAGLCDEAATRYIVENGRAAIEWLIGHGVPFTRDARAELGFHLTREGGHRHRRIIHAADATGHAVVTTLVDKVRAHPNITLLEDHFAIDLVTDAKLGLPGMRCHGLYVLDCKRGDVKTIIASQTVLATGGAGKVYLYTTNPDTATGDGIAMAWRAGCRVANMEFIQFHPTCLYHPFAKSFLISEAVRGEGGKLVLPDGTRFMPAHDERAELAPRDIVARAIDFEMKKRGLDCVYLDISHQSPAFIQEHFPTILARCLELGIDITRQPIPVVPAAHYTCGGVVTDQLGRTDIAGLYAVGETAYTGLHGANRLASNSLLECMVIGRGAAQDILGQPATAPTPTPIPAWDESRVTDADEEVVVSHNWDELRRMMWNYVGIVRTNKRLERAQHRIALLREEIAEYYANFRVSHDLLELRNLVEAASLIVDSALSRHESRGLHFSRDYPQTLPKALPTVMQPAHRRTSRKH.

Residues Ser-10–Ala-13, Lys-32, Ala-39–Gly-46, and Asp-214 contribute to the FAD site. Arg-281 serves as the catalytic Proton donor/acceptor. Residues Glu-366 and Ser-382–Leu-383 contribute to the FAD site.

This sequence belongs to the FAD-dependent oxidoreductase 2 family. NadB subfamily. FAD serves as cofactor.

The protein resides in the cytoplasm. It carries out the reaction L-aspartate + O2 = iminosuccinate + H2O2. Its pathway is cofactor biosynthesis; NAD(+) biosynthesis; iminoaspartate from L-aspartate (oxidase route): step 1/1. Catalyzes the oxidation of L-aspartate to iminoaspartate, the first step in the de novo biosynthesis of NAD(+). In Ralstonia nicotianae (strain ATCC BAA-1114 / GMI1000) (Ralstonia solanacearum), this protein is L-aspartate oxidase 1 (nadB1).